Here is a 532-residue protein sequence, read N- to C-terminus: 5-methylcytosine-modifying enzyme 1 (532 aa).

An L-ascorbate-binding site is contributed by 335 to 337; sequence SLT. Positions 345, 347, and 397 each coordinate Fe cation. Position 397–399 (397–399) interacts with L-ascorbate; that stretch reads HGT.

It belongs to the TET family. The cofactor is Fe(2+).

The protein localises to the nucleus. The catalysed reaction is a 5-methyl-2'-deoxycytidine in DNA + L-ascorbate + O2 = a (8S,9S)-5-glyceryl-2'-deoxycytidine in DNA + glyoxylate + CO2. It carries out the reaction a 5-methyl-2'-deoxycytidine in DNA + L-ascorbate + O2 = a (8S,9R)-5-glyceryl-2'-deoxycytidine in DNA + glyoxylate + CO2. In terms of biological role, dioxygenase that catalyzes DNA modification by mediating the conversion of the modified genomic base 5-methylcytosine (5mC) into 5-glyceryl-methylcytosine (5gmC). Catalyzes the conjugation of a glyceryl moiety from L-ascorbate (vitamin C) to the methyl group of 5mC through a carbon-carbon bond. 5gmC DNA modification may be required during photosynthesis as an epigenetic mark that couteracts DNA methylation. This chain is 5-methylcytosine-modifying enzyme 1, found in Chlamydomonas reinhardtii (Chlamydomonas smithii).